A 777-amino-acid polypeptide reads, in one-letter code: Endonuclease MutS2 (777 aa).

An ATP-binding site is contributed by 328 to 335 (GPNTGGKT). The Smr domain occupies 702–777 (LDIRGMNTLE…GDGATEVYLK (76 aa)).

This sequence belongs to the DNA mismatch repair MutS family. MutS2 subfamily. As to quaternary structure, homodimer. Binds to stalled ribosomes, contacting rRNA.

In terms of biological role, endonuclease that is involved in the suppression of homologous recombination and thus may have a key role in the control of bacterial genetic diversity. Its function is as follows. Acts as a ribosome collision sensor, splitting the ribosome into its 2 subunits. Detects stalled/collided 70S ribosomes which it binds and splits by an ATP-hydrolysis driven conformational change. Acts upstream of the ribosome quality control system (RQC), a ribosome-associated complex that mediates the extraction of incompletely synthesized nascent chains from stalled ribosomes and their subsequent degradation. Probably generates substrates for RQC. The polypeptide is Endonuclease MutS2 (Carboxydothermus hydrogenoformans (strain ATCC BAA-161 / DSM 6008 / Z-2901)).